We begin with the raw amino-acid sequence, 92 residues long: Small ribosomal subunit protein uS19 (92 aa).

It belongs to the universal ribosomal protein uS19 family.

In terms of biological role, protein S19 forms a complex with S13 that binds strongly to the 16S ribosomal RNA. The polypeptide is Small ribosomal subunit protein uS19 (Bartonella henselae (strain ATCC 49882 / DSM 28221 / CCUG 30454 / Houston 1) (Rochalimaea henselae)).